Reading from the N-terminus, the 481-residue chain is MPAVMIQGTGSDVGKSLLVAGLCRAARRRGLSVAPFKPQNMSNNAAVTADGGEIGRAQALQARAAGLEPMTDMNPVLLKPESDQGSQVIVQGRRVGTLRARDWFERKPSLMAPVLESFGRLTAAHDLVIVEGAGSPAEVNLRRGDIANMGFARAANVPVVLAGDIDRGGVIAQIVGTQAVIDPEDAAMVAGFLVNKFRGDVRLFDEGYRLIEDRTGWRGYGVVPFFPQAALLPAEDALDLGRPTGQGALTVAWLAFSRVANFDDLDPLKQEPGLTVVMVRPGQPIPAEAGLVILPGTKSTRGDLAFLRAQGWDVDLLAHHRRGGRVLGICGGYQMLGRTVADPQGLEGEPGATEGLGLLDVTTVMHPDKRLTRVEGRHVASGEPLSGYEIHIGATDGPDCARPFAEVDGRPEGAGSPDGRVTGSYLHGMFGSDRFRAAFLRSLGARTSDLAYDARVETVLDSLADHLEAHLDVAGLLALAR.

Positions 248–435 (ALTVAWLAFS…LHGMFGSDRF (188 aa)) constitute a GATase cobBQ-type domain. Residue cysteine 330 is the Nucleophile of the active site. The active site involves histidine 427.

This sequence belongs to the CobB/CobQ family. CobQ subfamily.

It participates in cofactor biosynthesis; adenosylcobalamin biosynthesis. Its function is as follows. Catalyzes amidations at positions B, D, E, and G on adenosylcobyrinic A,C-diamide. NH(2) groups are provided by glutamine, and one molecule of ATP is hydrogenolyzed for each amidation. The sequence is that of Cobyric acid synthase from Cereibacter sphaeroides (strain ATCC 17025 / ATH 2.4.3) (Rhodobacter sphaeroides).